The following is a 444-amino-acid chain: Type II NADH:quinone oxidoreductase (444 aa).

FAD-binding positions include 8 to 12, asparagine 38, and serine 120; that span reads GGGAG. Residues 186–191 and glycine 285 contribute to the NAD(+) site; that span reads VGGGAT. Aspartate 325 and alanine 341 together coordinate FAD.

This sequence belongs to the NADH dehydrogenase family. FAD serves as cofactor.

The protein localises to the cell inner membrane. The catalysed reaction is a quinone + NADH + H(+) = a quinol + NAD(+). It carries out the reaction a ubiquinone + NADH + H(+) = a ubiquinol + NAD(+). Its function is as follows. Alternative, nonproton pumping NADH:quinone oxidoreductase that delivers electrons to the respiratory chain by oxidation of NADH and reduction of quinones. Utilizes NADH exclusively, and electron flow from NADH to ubiquinone does not generate an electrochemical gradient. In Haemophilus influenzae (strain ATCC 51907 / DSM 11121 / KW20 / Rd), this protein is Type II NADH:quinone oxidoreductase (ndh).